We begin with the raw amino-acid sequence, 471 residues long: 5-hydroxytryptamine receptor 2B (471 aa).

The Extracellular portion of the chain corresponds to 1–26; that stretch reads MFQAAVGPLQTNISLPEETPGLELNW. Asparagine 12 is a glycosylation site (N-linked (GlcNAc...) asparagine). The chain crosses the membrane as a helical span at residues 27–49; the sequence is AALLIVMVIIPTIGGNILVILAV. Over 50-60 the chain is Cytoplasmic; that stretch reads WLEKKLQNATN. Residues 61–83 form a helical membrane-spanning segment; it reads FFLMSLAVADLLVGLLVMPIALI. The Extracellular portion of the chain corresponds to 84 to 99; the sequence is TILYDSDWPLPEPLCP. A disulfide bond links cysteine 98 and cysteine 182. The helical transmembrane segment at 100–121 threads the bilayer; that stretch reads IWLFLDVLFSTASIMHLCAISL. Residues aspartate 105 and threonine 110 each contribute to the ergotamine site. The short motif at 122 to 124 is the DRY motif; important for ligand-induced conformation changes element; sequence DRY. The Cytoplasmic portion of the chain corresponds to 122-141; the sequence is DRYIAIKKPIQHSQYKSRAK. Residues 142 to 162 traverse the membrane as a helical segment; sequence VMLKIALVWLISICIAIPIPI. At 163-191 the chain is on the extracellular side; it reads KGLRNYPHPNNITFTSNHTCVLKTDTFQE. Asparagine 173 and asparagine 179 each carry an N-linked (GlcNAc...) asparagine glycan. Leucine 184 provides a ligand contact to ergotamine. A [DE]RFG motif; may stabilize a conformation that preferentially activates signaling via beta-arrestin family members motif is present at residues 187–190; sequence DTFQ. Residues 192–214 form a helical membrane-spanning segment; the sequence is FIIFGSLVAFFIPLTIMMIIYFL. Residues 215–308 are Cytoplasmic-facing; sequence TVRVLRKKVY…TLTNEQRASK (94 aa). A helical transmembrane segment spans residues 309 to 329; it reads VLGIVFLLFVVMWCPFFITNI. The Extracellular segment spans residues 330 to 344; sequence TSALCGPCDANIIGR. Cysteine 334 and cysteine 337 form a disulfide bridge. A helical transmembrane segment spans residues 345-366; that stretch reads LMEIFSWVGYVSSGINPLVYTL. Residues 360 to 364 carry the NPxxY motif; important for ligand-induced conformation changes and signaling motif; that stretch reads NPLVY. Residues 367–471 lie on the Cytoplasmic side of the membrane; that stretch reads FNKTFRQAFT…CKQEERVSCV (105 aa). Cysteine 381 carries the S-palmitoyl cysteine lipid modification. Positions 469-471 match the PDZ-binding motif; sequence SCV.

Belongs to the G-protein coupled receptor 1 family. As to expression, detected in brain, heart and gut.

It is found in the cell membrane. The protein resides in the synapse. It localises to the synaptosome. Its function is as follows. G-protein coupled receptor for 5-hydroxytryptamine (serotonin). Also functions as a receptor for various ergot alkaloid derivatives and psychoactive substances. Ligand binding causes a conformation change that triggers signaling via guanine nucleotide-binding proteins (G proteins) and modulates the activity of downstream effectors. HTR2B is coupled to G(q)/G(11) G alpha proteins and activates phospholipase C-beta, releasing diacylglycerol (DAG) and inositol 1,4,5-trisphosphate (IP3) second messengers that modulate the activity of phosphatidylinositol 3-kinase and promote the release of Ca(2+) ions from intracellular stores, respectively. Beta-arrestin family members inhibit signaling via G proteins and mediate activation of alternative signaling pathways. Plays a role in the regulation of dopamine and 5-hydroxytryptamine release, 5-hydroxytryptamine uptake and in the regulation of extracellular dopamine and 5-hydroxytryptamine levels, and thereby affects neural activity. This Dichotomyctere fluviatilis (Green pufferfish) protein is 5-hydroxytryptamine receptor 2B (htr2b).